Consider the following 716-residue polypeptide: Mitochondrial Rho GTPase 1 (716 aa).

Over 1–692 (MSPDAIRVVV…VSVDQDDIKH (692 aa)) the chain is Cytoplasmic. One can recognise a Miro 1 domain in the interval 3–224 (PDAIRVVVCG…FYLCQRAVTH (222 aa)). A disordered region spans residues 58–99 (NDQDHHHHHQSSPSTMKNKRKHNNKRERERERESSINNVQPN). GTP is bound by residues 84–91 (ERERERES), 113–115 (DTS), and 167–170 (NKSD). Residues 240–275 (GAIKPLKRIFWLSDTDQDGYLNFEELSELHKKCFGI) enclose the EF-hand 1 domain. Ca(2+)-binding residues include D253, D255, D257, Y259, and E264. Residues 303–327 (TQTPPQQQHLATSAGTPNGTTTTTS) are disordered. The EF-hand 2 domain maps to 388–423 (TGYKFFVDLFIKFDKDNDGGLNEDELNTLFRSTPGI). The Ca(2+) site is built by D401, D403, D405, and E412. The 167-residue stretch at 505–671 (RNVFNCFIVG…FIQLVDAAKT (167 aa)) folds into the Miro 2 domain. Residues 514–521 (GAPKAGKS), 550–554 (ELRGG), and 620–623 (LKAD) each bind GTP. Residues 693–713 (IIMTGAAIAVVGLVSIWVLNS) traverse the membrane as a helical; Anchor for type IV membrane protein segment. At 714–716 (LRR) the chain is on the mitochondrial intermembrane side.

Belongs to the mitochondrial Rho GTPase family.

The protein localises to the mitochondrion outer membrane. In terms of biological role, mitochondrial GTPase involved in mitochondrial trafficking. Probably involved in control of anterograde transport of mitochondria and their subcellular distribution. This is Mitochondrial Rho GTPase 1 (GEM1) from Candida albicans (strain SC5314 / ATCC MYA-2876) (Yeast).